The primary structure comprises 99 residues: NADH-quinone oxidoreductase subunit K (99 aa).

3 helical membrane-spanning segments follow: residues 2–22, 28–48, and 60–80; these read PVEY…LGVL, LILM…FLAF, and IAFF…AVVI.

This sequence belongs to the complex I subunit 4L family. As to quaternary structure, NDH-1 is composed of 14 different subunits. Subunits NuoA, H, J, K, L, M, N constitute the membrane sector of the complex.

It localises to the cell inner membrane. The catalysed reaction is a quinone + NADH + 5 H(+)(in) = a quinol + NAD(+) + 4 H(+)(out). Functionally, NDH-1 shuttles electrons from NADH, via FMN and iron-sulfur (Fe-S) centers, to quinones in the respiratory chain. The immediate electron acceptor for the enzyme in this species is believed to be ubiquinone. Couples the redox reaction to proton translocation (for every two electrons transferred, four hydrogen ions are translocated across the cytoplasmic membrane), and thus conserves the redox energy in a proton gradient. The polypeptide is NADH-quinone oxidoreductase subunit K (Anaeromyxobacter dehalogenans (strain 2CP-1 / ATCC BAA-258)).